A 133-amino-acid chain; its full sequence is Ribosome-binding factor A (133 aa).

Belongs to the RbfA family. Monomer. Binds 30S ribosomal subunits, but not 50S ribosomal subunits or 70S ribosomes.

It is found in the cytoplasm. Its function is as follows. One of several proteins that assist in the late maturation steps of the functional core of the 30S ribosomal subunit. Associates with free 30S ribosomal subunits (but not with 30S subunits that are part of 70S ribosomes or polysomes). Required for efficient processing of 16S rRNA. May interact with the 5'-terminal helix region of 16S rRNA. This Salmonella typhi protein is Ribosome-binding factor A.